The primary structure comprises 1495 residues: Terminal uridylyltransferase 7 (1495 aa).

4 disordered regions span residues methionine 1–glutamine 30, histidine 43–proline 69, tryptophan 89–tyrosine 140, and leucine 162–aspartate 205. Positions aspartate 15–arginine 26 are enriched in basic and acidic residues. Residues threonine 57 and threonine 64 each carry the phosphothreonine modification. 2 stretches are compositionally biased toward basic and acidic residues: residues aspartate 92 to proline 118 and glutamine 128 to tyrosine 140. Phosphoserine occurs at positions 132 and 172. A compositionally biased stretch (basic residues) spans glutamine 178–lysine 187. The Matrin-type zinc finger occupies tyrosine 244 to glutamate 274. The PAP-associated 1 domain maps to valine 551 to serine 600. The residue at position 600 (serine 600) is a Phosphoserine. Residues aspartate 734–glycine 756 show a composition bias toward basic and acidic residues. Disordered regions lie at residues aspartate 734–arginine 757 and threonine 831–glutamate 898. The span at threonine 831–methionine 841 shows a compositional bias: polar residues. 3 stretches are compositionally biased toward acidic residues: residues proline 843–glutamate 859, glutamate 868–aspartate 880, and glycine 887–glutamate 898. Serine 844 carries the phosphoserine modification. Phosphoserine is present on residues serine 893 and serine 939. The tract at residues serine 951–serine 1495 is sufficient for monouridylation activity. A CCHC-type 1 zinc finger spans residues valine 963–glutamate 980. UTP contacts are provided by residues serine 1047 to asparagine 1050, serine 1057 to aspartate 1060, asparagine 1130, lysine 1152, serine 1170 to threonine 1174, and histidine 1286. Aspartate 1058 and aspartate 1060 together coordinate Mg(2+). Residues serine 1233–histidine 1286 form the PAP-associated 2 domain. Residues arginine 1345–methionine 1362 form a CCHC-type 2 zinc finger. Disordered stretches follow at residues arginine 1367–alanine 1424 and cysteine 1466–serine 1495. A compositionally biased stretch (basic and acidic residues) spans proline 1381–proline 1410. Residues lysine 1451–glutamine 1468 form a CCHC-type 3 zinc finger. The span at lysine 1470–lysine 1485 shows a compositional bias: polar residues.

It belongs to the DNA polymerase type-B-like family. As to quaternary structure, interacts with MOV10; the interaction is RNA-dependent. Mg(2+) is required as a cofactor. The cofactor is Mn(2+).

The protein localises to the cytoplasm. The catalysed reaction is RNA(n) + UTP = RNA(n)-3'-uridine ribonucleotide + diphosphate. Functionally, uridylyltransferase that mediates the terminal uridylation of mRNAs with short (less than 25 nucleotides) poly(A) tails, hence facilitating global mRNA decay. Essential for both oocyte maturation and fertility. Through 3' terminal uridylation of mRNA, sculpts, with TUT7, the maternal transcriptome by eliminating transcripts during oocyte growth. Involved in microRNA (miRNA)-induced gene silencing through uridylation of deadenylated miRNA targets. Also functions as an integral regulator of microRNA biogenesiS using 3 different uridylation mechanisms. Acts as a suppressor of miRNA biogenesis by mediating the terminal uridylation of some miRNA precursors, including that of let-7 (pre-let-7). Uridylated pre-let-7 RNA is not processed by Dicer and undergo degradation. Pre-let-7 uridylation is strongly enhanced in the presence of LIN28A. In the absence of LIN28A, TUT7 and TUT4 monouridylate group II pre-miRNAs, which includes most of pre-let7 members, that shapes an optimal 3' end overhang for efficient processing. Add oligo-U tails to truncated pre-miRNAS with a 5' overhang which may promote rapid degradation of non-functional pre-miRNA species. Does not play a role in replication-dependent histone mRNA degradation. Due to functional redundancy between TUT4 and TUT7, the identification of the specific role of each of these proteins is difficult. TUT4 and TUT7 restrict retrotransposition of long interspersed element-1 (LINE-1) in cooperation with MOV10 counteracting the RNA chaperonne activity of L1RE1. TUT7 uridylates LINE-1 mRNAs in the cytoplasm which inhibits initiation of reverse transcription once in the nucleus, whereas uridylation by TUT4 destabilizes mRNAs in cytoplasmic ribonucleoprotein granules. The polypeptide is Terminal uridylyltransferase 7 (Homo sapiens (Human)).